A 107-amino-acid chain; its full sequence is uncharacterized protein (107 aa).

Residues 52–72 (LIIHDLFIYIFILNFFFFPFC) traverse the membrane as a helical segment.

It localises to the membrane. This is an uncharacterized protein from Saccharomyces cerevisiae (strain ATCC 204508 / S288c) (Baker's yeast).